Consider the following 121-residue polypeptide: Cysteine-rich DPF motif domain-containing protein 1 (121 aa).

The protein belongs to the CDPF1 family.

The chain is Cysteine-rich DPF motif domain-containing protein 1 (CDPF1) from Bos taurus (Bovine).